A 93-amino-acid polypeptide reads, in one-letter code: U11-ctenitoxin-Pn1a (93 aa).

The signal sequence occupies residues 1–21 (MKCAVLFLSVIALVHIFVVEA). Residues 22–34 (EEEPDSDALVPQE) constitute a propeptide that is removed on maturation. Cystine bridges form between Cys37-Cys51, Cys44-Cys57, Cys50-Cys75, Cys59-Cys73, and Cys83-Cys90.

This sequence belongs to the neurotoxin 09 (Tx3-6) family. Expressed by the venom gland.

It localises to the secreted. Its function is as follows. Probable neurotoxin. The protein is U11-ctenitoxin-Pn1a of Phoneutria nigriventer (Brazilian armed spider).